The following is a 248-amino-acid chain: Ribosomal RNA small subunit methyltransferase J (248 aa).

S-adenosyl-L-methionine contacts are provided by residues 98–99 (RD), 114–115 (ER), 150–151 (SS), and aspartate 168.

The protein belongs to the methyltransferase superfamily. RsmJ family.

The protein resides in the cytoplasm. The catalysed reaction is guanosine(1516) in 16S rRNA + S-adenosyl-L-methionine = N(2)-methylguanosine(1516) in 16S rRNA + S-adenosyl-L-homocysteine + H(+). Specifically methylates the guanosine in position 1516 of 16S rRNA. The sequence is that of Ribosomal RNA small subunit methyltransferase J from Shewanella baltica (strain OS223).